Consider the following 983-residue polypeptide: Bifunctional glutamine synthetase adenylyltransferase/adenylyl-removing enzyme (983 aa).

An adenylyl removase region spans residues 1–468 (MTVENAKALF…KQYAALFAQA (468 aa)). The segment at 473 to 983 (AASGNLVFTG…FDKLVGHGAD (511 aa)) is adenylyl transferase.

It belongs to the GlnE family. Mg(2+) serves as cofactor.

The catalysed reaction is [glutamine synthetase]-O(4)-(5'-adenylyl)-L-tyrosine + phosphate = [glutamine synthetase]-L-tyrosine + ADP. The enzyme catalyses [glutamine synthetase]-L-tyrosine + ATP = [glutamine synthetase]-O(4)-(5'-adenylyl)-L-tyrosine + diphosphate. Involved in the regulation of glutamine synthetase GlnA, a key enzyme in the process to assimilate ammonia. When cellular nitrogen levels are high, the C-terminal adenylyl transferase (AT) inactivates GlnA by covalent transfer of an adenylyl group from ATP to specific tyrosine residue of GlnA, thus reducing its activity. Conversely, when nitrogen levels are low, the N-terminal adenylyl removase (AR) activates GlnA by removing the adenylyl group by phosphorolysis, increasing its activity. The regulatory region of GlnE binds the signal transduction protein PII (GlnB) which indicates the nitrogen status of the cell. This Brucella suis biovar 1 (strain 1330) protein is Bifunctional glutamine synthetase adenylyltransferase/adenylyl-removing enzyme.